Consider the following 425-residue polypeptide: 3-phosphoshikimate 1-carboxyvinyltransferase (425 aa).

Residues lysine 21, serine 22, and arginine 26 each contribute to the 3-phosphoshikimate site. Lysine 21 contacts phosphoenolpyruvate. 2 residues coordinate phosphoenolpyruvate: glycine 91 and arginine 119. Positions 164, 166, 311, and 338 each coordinate 3-phosphoshikimate. Glutamine 166 contributes to the phosphoenolpyruvate binding site. Catalysis depends on aspartate 311, which acts as the Proton acceptor. The phosphoenolpyruvate site is built by arginine 342 and arginine 383.

Belongs to the EPSP synthase family. Monomer.

It localises to the cytoplasm. It carries out the reaction 3-phosphoshikimate + phosphoenolpyruvate = 5-O-(1-carboxyvinyl)-3-phosphoshikimate + phosphate. The protein operates within metabolic intermediate biosynthesis; chorismate biosynthesis; chorismate from D-erythrose 4-phosphate and phosphoenolpyruvate: step 6/7. Catalyzes the transfer of the enolpyruvyl moiety of phosphoenolpyruvate (PEP) to the 5-hydroxyl of shikimate-3-phosphate (S3P) to produce enolpyruvyl shikimate-3-phosphate and inorganic phosphate. The polypeptide is 3-phosphoshikimate 1-carboxyvinyltransferase (Campylobacter fetus subsp. fetus (strain 82-40)).